The sequence spans 631 residues: ATP-dependent RNA helicase mrh4, mitochondrial (631 aa).

Residues 1–45 constitute a mitochondrion transit peptide; it reads MNRLGRLPLPLPPSVCLFCRFRATASLPSSLQATRSMATARLRRR. Positions 68–112 are disordered; sequence KERFGPFAGMNQTEARIRETPRARSRAAQKRSGEPEEDSQKESPL. Over residues 98 to 108 the composition is skewed to basic and acidic residues; the sequence is RSGEPEEDSQK. The Q motif motif lies at 141–174; sequence TSFDQFQLLPVVRNSISSQALPGLVDVTPTPIQR. A compositionally biased stretch (basic and acidic residues) spans 180 to 193; the sequence is LLEEPKTEKKPTKA. The segment at 180 to 199 is disordered; it reads LLEEPKTEKKPTKADDDEPR. A Helicase ATP-binding domain is found at 194 to 406; that stretch reads DDDEPRYDQY…RKRYPDIKRL (213 aa). Position 207–214 (207–214) interacts with ATP; it reads AETGSGKT. The disordered stretch occupies residues 229-249; the sequence is EARDKELEKKEQEEKAREREE. A DEAD box motif is present at residues 353 to 356; sequence DEAD. Positions 455–631 constitute a Helicase C-terminal domain; that stretch reads GPYASYVAPK…EGMFRGQALI (177 aa).

Belongs to the DEAD box helicase family. MRH4 subfamily.

The protein localises to the mitochondrion. It catalyses the reaction ATP + H2O = ADP + phosphate + H(+). ATP-binding RNA helicase involved in mitochondrial RNA metabolism. Required for maintenance of mitochondrial DNA. In Aspergillus fumigatus (strain ATCC MYA-4609 / CBS 101355 / FGSC A1100 / Af293) (Neosartorya fumigata), this protein is ATP-dependent RNA helicase mrh4, mitochondrial (mrh4).